We begin with the raw amino-acid sequence, 394 residues long: Cytochrome b (394 aa).

4 consecutive transmembrane segments (helical) span residues 39 to 59 (FGSL…FLAM), 83 to 105 (WLLR…LHTF), 120 to 140 (VWCL…IGYV), and 186 to 206 (FFSL…LHLA). Residues histidine 89 and histidine 103 each contribute to the heme b site. 2 residues coordinate heme b: histidine 191 and histidine 204. Position 209 (histidine 209) interacts with a ubiquinone. The next 4 membrane-spanning stretches (helical) occupy residues 232-252 (FYVK…IWIF), 296-316 (AGGV…PFFK), 328-348 (IYQG…WIGC), and 355-374 (FVTI…AITP).

It belongs to the cytochrome b family. The main subunits of complex b-c1 are: cytochrome b, cytochrome c1 and the Rieske protein. Heme b is required as a cofactor.

It is found in the mitochondrion inner membrane. Component of the ubiquinol-cytochrome c reductase complex (complex III or cytochrome b-c1 complex) that is part of the mitochondrial respiratory chain. The b-c1 complex mediates electron transfer from ubiquinol to cytochrome c. Contributes to the generation of a proton gradient across the mitochondrial membrane that is then used for ATP synthesis. This is Cytochrome b (MT-CYB) from Oenothera berteroana (Bertero's evening primrose).